We begin with the raw amino-acid sequence, 469 residues long: Argininosuccinate lyase (469 aa).

It belongs to the lyase 1 family. Argininosuccinate lyase subfamily.

The protein localises to the cytoplasm. It carries out the reaction 2-(N(omega)-L-arginino)succinate = fumarate + L-arginine. It functions in the pathway amino-acid biosynthesis; L-arginine biosynthesis; L-arginine from L-ornithine and carbamoyl phosphate: step 3/3. The sequence is that of Argininosuccinate lyase from Burkholderia mallei (strain NCTC 10247).